Here is a 226-residue protein sequence, read N- to C-terminus: V-type proton ATPase subunit E (226 aa).

This sequence belongs to the V-ATPase E subunit family. As to quaternary structure, V-ATPase is a heteromultimeric enzyme made up of two complexes: the ATP-hydrolytic V1 complex and the proton translocation V0 complex. The V1 complex consists of three catalytic AB heterodimers that form a heterohexamer, three peripheral stalks each consisting of EG heterodimers, one central rotor including subunits D and F, and the regulatory subunits C and H. The proton translocation complex V0 consists of the proton transport subunit a, a ring of proteolipid subunits c9c'', rotary subunit d, subunits e and f, and the accessory subunits vah-19/Ac45 and vah-20/PRR. Expressed in the excretory cell and syncytial hypodermal cells (at protein level). Expressed in the intestine (at protein level).

The protein localises to the cytoplasm. It is found in the apical cell membrane. Functionally, subunit of the V1 complex of vacuolar(H+)-ATPase (V-ATPase), a multisubunit enzyme composed of a peripheral complex (V1) that hydrolyzes ATP and a membrane integral complex (V0) that translocates protons. V-ATPase is responsible for acidifying and maintaining the pH of intracellular compartments and in some cell types, is targeted to the plasma membrane, where it is responsible for acidifying the extracellular environment. Regulates pH homeostasis in the intestine. Probably by regulating cytoplasmic pH, required for cell survival in the intestine and hypodermis. Involved in receptor-mediated endocytosis. Involved in embryogenesis and larval development. In Caenorhabditis elegans, this protein is V-type proton ATPase subunit E.